We begin with the raw amino-acid sequence, 257 residues long: Major prion protein (257 aa).

A signal peptide spans 1 to 24; the sequence is MVKSHIGSWLLVLFVATWSDIGFC. Residues 25–234 are interaction with GRB2, ERI3 and SYN1; the sequence is KKRPKPGGGW…ESEAYYQRGA (210 aa). The tract at residues 27 to 114 is disordered; that stretch reads RPKPGGGWNT…KPSKPKTNMK (88 aa). A run of 5 repeats spans residues 54–62, 63–70, 71–78, 79–86, and 87–95. Residues 54–95 are 5 X 8 AA tandem repeats of P-H-G-G-G-W-G-Q; sequence PQGGGGWGQPHGGGWGQPHGGGWGQPHGGGWGQPHGGGGWGQ. A compositionally biased stretch (gly residues) spans 55-101; it reads QGGGGWGQPHGGGWGQPHGGGWGQPHGGGWGQPHGGGGWGQGGGSHG. Cu(2+)-binding residues include histidine 64, glycine 65, glycine 66, histidine 72, glycine 73, glycine 74, histidine 80, glycine 81, glycine 82, histidine 88, glycine 90, and glycine 91. Residues cysteine 183 and cysteine 218 are joined by a disulfide bond. N-linked (GlcNAc...) asparagine glycans are attached at residues asparagine 185 and asparagine 201. Alanine 234 is lipidated: GPI-anchor amidated alanine. Residues 235 to 257 constitute a propeptide, removed in mature form; it reads SAILFSPPPVILLISLLILLIVG.

The protein belongs to the prion family. Monomer and homodimer. Has a tendency to aggregate into amyloid fibrils containing a cross-beta spine, formed by a steric zipper of superposed beta-strands. Soluble oligomers may represent an intermediate stage on the path to fibril formation. Copper binding may promote oligomerization. Interacts with GRB2, APP, ERI3/PRNPIP and SYN1. Mislocalized cytosolically exposed PrP interacts with MGRN1; this interaction alters MGRN1 subcellular location and causes lysosomal enlargement. Interacts with KIAA1191.

It localises to the cell membrane. The protein localises to the golgi apparatus. Its primary physiological function is unclear. Has cytoprotective activity against internal or environmental stresses. May play a role in neuronal development and synaptic plasticity. May be required for neuronal myelin sheath maintenance. May play a role in iron uptake and iron homeostasis. Soluble oligomers are toxic to cultured neuroblastoma cells and induce apoptosis (in vitro). Association with GPC1 (via its heparan sulfate chains) targets PRNP to lipid rafts. Also provides Cu(2+) or Zn(2+) for the ascorbate-mediated GPC1 deaminase degradation of its heparan sulfate side chains. The protein is Major prion protein (PRNP) of Mustela putorius furo (European domestic ferret).